The following is a 35-amino-acid chain: Kappa-theraphotoxin-Tb1c (35 aa).

Cystine bridges form between Cys3/Cys18, Cys10/Cys23, and Cys17/Cys30.

The protein belongs to the neurotoxin 10 (Hwtx-1) family. 59 (Tltx) subfamily. As to quaternary structure, monomer. In terms of tissue distribution, expressed by the venom gland.

It is found in the secreted. Functionally, blocks Kv4.2/KCND2 voltage-gated potassium channels probably by shifting the voltage-dependence of channel activation to more depolarized potentials and by binding to the S3-S4 linker region of the voltage sensor domain. In Theraphosa blondi (Goliath birdeating spider), this protein is Kappa-theraphotoxin-Tb1c.